The chain runs to 169 residues: Secreted LysM effector Blys5 (169 aa).

The N-terminal stretch at 1–19 (MKLSVISAVFVSLAAAAAA) is a signal peptide. 2 LysM domains span residues 47–94 (TYYQ…YYCV) and 121–167 (QWYK…NVCV).

It belongs to the secreted LysM effector family.

In terms of biological role, secreted effector that enables the plant pathogenic fungus to manipulate host defenses for successful infection. Required for the full virulence to infect insect hosts. Protects fungal hyphae against the hydrolytic activity of chitinase and plays an important role in evasion of insect immunities. Binds chitin and can additionally bind chitosan and cellulose. Coats and protects the cell walls of insect pathogens from host cell recognition and additionally shields fungal cells from the hydrolysis of insect chitinases. This is Secreted LysM effector Blys5 from Beauveria bassiana (strain ARSEF 2860) (White muscardine disease fungus).